The primary structure comprises 354 residues: Photosystem II D2 protein (354 aa).

Thr-2 carries the post-translational modification N-acetylthreonine. Thr-2 carries the post-translational modification Phosphothreonine. Residues 42 to 62 (CAYFALGGFFTGNTFVTSWYT) traverse the membrane as a helical segment. Residue His-119 coordinates chlorophyll a. Residues 126–142 (GFMLRQFEIARAVKIRP) form a helical membrane-spanning segment. The pheophytin a site is built by Gln-131 and Asn-144. A helical transmembrane segment spans residues 154–167 (VFVSVFLIYPLGQQ). His-199 provides a ligand contact to chlorophyll a. A helical transmembrane segment spans residues 209–229 (AALLCAIHGATVENTLFEDGD). The a plastoquinone site is built by His-216 and Phe-263. Residue His-216 participates in Fe cation binding. Residue His-270 participates in Fe cation binding. Residues 280 to 296 (GLWMSAIGVVGLALNLR) form a helical membrane-spanning segment.

It belongs to the reaction center PufL/M/PsbA/D family. As to quaternary structure, PSII is composed of 1 copy each of membrane proteins PsbA, PsbB, PsbC, PsbD, PsbE, PsbF, PsbH, PsbI, PsbJ, PsbK, PsbL, PsbM, PsbT, PsbX, PsbY, PsbZ, Psb30/Ycf12, at least 3 peripheral proteins of the oxygen-evolving complex and a large number of cofactors. It forms dimeric complexes. The D1/D2 heterodimer binds P680, chlorophylls that are the primary electron donor of PSII, and subsequent electron acceptors. It shares a non-heme iron and each subunit binds pheophytin, quinone, additional chlorophylls, carotenoids and lipids. There is also a Cl(-1) ion associated with D1 and D2, which is required for oxygen evolution. The PSII complex binds additional chlorophylls, carotenoids and specific lipids. serves as cofactor.

The protein localises to the plastid. It is found in the chloroplast thylakoid membrane. It carries out the reaction 2 a plastoquinone + 4 hnu + 2 H2O = 2 a plastoquinol + O2. Its function is as follows. Photosystem II (PSII) is a light-driven water:plastoquinone oxidoreductase that uses light energy to abstract electrons from H(2)O, generating O(2) and a proton gradient subsequently used for ATP formation. It consists of a core antenna complex that captures photons, and an electron transfer chain that converts photonic excitation into a charge separation. The D1/D2 (PsbA/PsbD) reaction center heterodimer binds P680, the primary electron donor of PSII as well as several subsequent electron acceptors. D2 is needed for assembly of a stable PSII complex. The chain is Photosystem II D2 protein from Mesostigma viride (Green alga).